A 372-amino-acid polypeptide reads, in one-letter code: MADS-box transcription factor pvg4 (372 aa).

One can recognise an MADS-box domain in the interval 1-61 (MGRKKISIAP…GRLHVFCSSD (61 aa)). Positions 81 to 187 (SHFSSSPVEE…HPPHPHFHNN (107 aa)) are disordered. Residues 84-100 (SSSPVEESSTVSPETTT) show a composition bias toward low complexity. A compositionally biased stretch (polar residues) spans 114 to 145 (QDQPLSDSQLDTGDSPATSETTVQDYNPQVQS). Basic residues predominate over residues 167-184 (QHHHPHTRPPHHPPHPHF).

It localises to the nucleus. Functionally, acts in transcription regulation. May bind to a MEF2-like typee II promoter sequence. The protein is MADS-box transcription factor pvg4 (pvg4) of Schizosaccharomyces pombe (strain 972 / ATCC 24843) (Fission yeast).